Reading from the N-terminus, the 1571-residue chain is Guanine nucleotide-releasing factor 2 (1571 aa).

Disordered stretches follow at residues 28–85 (LPPH…RDTN), 202–271 (INSG…KLAR), and 287–316 (MRTTNNTLGRSHSPHSPRTKHGTKAPPTTE). Residues 55-73 (QLHHHHHQQHHHNHHRLWK) are compositionally biased toward basic residues. The span at 74 to 83 (TQRQSWSPRD) shows a compositional bias: polar residues. The segment covering 230–248 (TPGGSSRVGGAGAGGGGGV) has biased composition (gly residues). Over residues 287–297 (MRTTNNTLGRS) the composition is skewed to polar residues. The span at 298–309 (HSPHSPRTKHGT) shows a compositional bias: basic residues. 2 positions are modified to phosphoserine: serine 496 and serine 523. 6 disordered regions span residues 513–580 (HNVN…QASP), 614–646 (RSRSPDENSQCSFDSALNHSREEEDQQQQHQHL), 695–719 (GEGVAAAASGDGETNSNRHSNESGF), 728–747 (STQTTDYSVQSSTKSSSSNS), 776–868 (QRHI…SEVA), and 879–898 (LNHHPHTASAGQLQQWHSKH). Threonine 524 carries the phosphothreonine modification. Serine 526 is subject to Phosphoserine. Pro residues predominate over residues 532–550 (SPPPKPPLPNRASNPPPLP). Residues 546-556 (PPPLPPKRRSQ) carry the SH3-binding motif. The span at 556 to 579 (QPSASAGTVGVGCSSSTSTSNQAS) shows a compositional bias: low complexity. Phosphoserine is present on serine 615. The segment covering 620–631 (ENSQCSFDSALN) has biased composition (polar residues). Residues 697-707 (GVAAAASGDGE) are compositionally biased toward low complexity. Residues 708-718 (TNSNRHSNESG) show a composition bias toward polar residues. Low complexity-rich tracts occupy residues 735–747 (SVQSSTKSSSSNS) and 780–824 (SSSS…DLAP). Positions 820–831 (ADLAPALPPKSI) match the SH3-binding motif. The segment covering 851–866 (VQSSSGWASHRSSQSE) has biased composition (polar residues). 2 short sequence motifs (SH3-binding) span residues 924-935 (DQEPPPLPIKKK) and 986-997 (LEMPPALPPKNY). Positions 1013–1038 (PVIVTTPPPSPKPTLGENGSTGRPDS) are disordered. The region spanning 1170–1292 (DGPEVKGGYI…LRNKFVEKVT (123 aa)) is the N-terminal Ras-GEF domain. The 226-residue stretch at 1339–1564 (KSLEIAEQMT…WQISEKIKPR (226 aa)) folds into the Ras-GEF domain.

As to expression, ubiquitous.

In terms of biological role, guanine nucleotide-releasing protein that binds to SH3 domain of Crk. Transduces signals from Crk to activate RAS. Also involved in MAPK activation. The protein is Guanine nucleotide-releasing factor 2 (C3G) of Drosophila melanogaster (Fruit fly).